A 373-amino-acid polypeptide reads, in one-letter code: Cytoplasmic envelopment protein 2 (373 aa).

The tract at residues 1–35 (MAQLGPRRPLAPPGPPGTLPRPDSRAGARGTRDRV) is disordered. The span at 9–19 (PLAPPGPPGTL) shows a compositional bias: pro residues. The segment covering 22–35 (PDSRAGARGTRDRV) has biased composition (basic and acidic residues).

This sequence belongs to the herpesviridae cytoplasmic envelopment protein 2 family. As to quaternary structure, interacts with cytoplasmic envelopment protein 3 and with the capsid.

It is found in the virion tegument. The protein resides in the host cytoplasm. It localises to the host nucleus. Its function is as follows. Plays a critical role in cytoplasmic virus egress. Participates in the final step of tegumentation and envelope acquisition within the host cytoplasm by directly interacting with the capsid. Upon virion binding to target cell, a signaling cascade is triggered to disrupt the interaction with the capsid, thereby preparing capsid uncoating. The sequence is that of Cytoplasmic envelopment protein 2 (UL16) from Homo sapiens (Human).